The sequence spans 415 residues: SNF1 protein kinase subunit beta-2 (415 aa).

3 disordered regions span residues 1 to 43, 55 to 158, and 249 to 276; these read MGTT…EMDA, KCSD…PSEI, and EKNP…SSIA. A lipid anchor (N-myristoyl glycine) is attached at Gly2. The span at 9–19 shows a compositional bias: basic residues; the sequence is AQKKQTTKKCR. Residues 55–69 are compositionally biased toward polar residues; that stretch reads KCSDSQDAGQPSREG. A Phosphoserine modification is found at Ser66. Basic and acidic residues-rich tracts occupy residues 122 to 150 and 249 to 264; these read PKQD…RAKE and EKNP…EADS. The segment at 154–335 is kinase-interacting sequence (KIS); required for interaction with SNF1; that stretch reads GPSEIKSSLM…LDRQQSNTDT (182 aa). Ser298 is modified (phosphoserine). The tract at residues 336-415 is association with SNF1 kinase complex (ASC) domain; required for interaction with SNF4; that stretch reads SWLTPPQLPP…QILYTPIESS (80 aa).

Belongs to the 5'-AMP-activated protein kinase beta subunit family. As to quaternary structure, component of the SNF1 kinase complex, a heterotrimeric complex composed of the catalytic alpha subunit SNF1, one of the three related beta subunits SIP1, SIP2 or GAL83, and the regulatory gamma subunit SNF4. The beta subunit serves as a bridge between the catalytic and the regulatory subunit. Interacts (via KIS domain) with SNF1. Interacts (via ASC domain) with SNF4. In terms of processing, phosphorylated by SNF1 in vitro.

Its subcellular location is the cytoplasm. It is found in the cell membrane. Beta subunit of the SNF1 kinase complex, which is required for transcriptional, metabolic, and developmental adaptations in response to glucose limitation. Has a structural role, mediating heterotrimer formation, and a regulatory role, defining carbon source-regulated subcellular location and substrate specificity of the SNF1 kinase complex. Involved in the regulation of aging. Acts as a negative regulator of nuclear SNF1 activity in young cells by sequestering its activating gamma subunit at the plasma membrane. The sequence is that of SNF1 protein kinase subunit beta-2 (SIP2) from Saccharomyces cerevisiae (strain ATCC 204508 / S288c) (Baker's yeast).